Consider the following 507-residue polypeptide: MGRKKIQIQRITDERNRQVTFTKRKFGLMKKAYELSVLCDCEIALIIFNHSNKLFQYASTDMDKVLLKYTEYNEPHESRTNADIIETLRKKGFNGCDSPEPDGEDSLEQSPLLEDKYRRASEELDGLFRRYGSSVPAPNFAMPVTVPVSNQSSMQFSNPSSSLVTPSLVTSSLTDPRLLSPQQPALQRNSVSPGLPQRPASAGAMLGRDLNSANGACPNPVGNGYVSARASPGLLPVANGNGLNKVIPAKSPPPPTHNTQLGAPSRKPDLRVITSQGGKGLMHHLNNAQRLGVSQSTHSLTTPVVSVATPSLLSQGLPFSSMPTAYNTDYQLPSAELSSLPAFSSPAGLALGNVTAWQQPQQPQQPQPPQPPQSQPQPPQPQPQQPPQQQPHLVPVSLSNLIPGSPLPHVGAALTVTTHPHISIKSEPVSPSRERSPAPPPPAVFPAARPEPGEGLSSPAGGSYETGDRDDGRGDFGPTLGLLRPAPEPEAEGSAVKRMRLDTWTLK.

The MADS-box domain occupies 3 to 57 (RKKIQIQRITDERNRQVTFTKRKFGLMKKAYELSVLCDCEIALIIFNHSNKLFQY). The mef2-type DNA-binding region spans 58-86 (ASTDMDKVLLKYTEYNEPHESRTNADIIE). Phosphoserine occurs at positions 98, 106, 110, 121, and 180. The tract at residues 174–207 (TDPRLLSPQQPALQRNSVSPGLPQRPASAGAMLG) is disordered. Residues 180–192 (SPQQPALQRNSVS) show a composition bias toward polar residues. Ser190 carries the post-translational modification Phosphoserine; by PKA. Ser231 is modified (phosphoserine). Disordered regions lie at residues 244–267 (NKVI…PSRK), 357–392 (WQQP…QQPH), and 423–507 (SIKS…WTLK). Lys245 is modified (N6-acetyllysine). Residue Ser251 is modified to Phosphoserine. Pro residues predominate over residues 363–389 (PQQPQPPQPPQSQPQPPQPQPQQPPQQ). Position 425 is an N6-acetyllysine; alternate (Lys425). A Glycyl lysine isopeptide (Lys-Gly) (interchain with G-Cter in SUMO); alternate cross-link involves residue Lys425. A Phosphoserine modification is found at Ser430.

As to quaternary structure, forms a complex with class II HDACs in undifferentiating cells. On myogenic differentiation, HDACs are released into the cytoplasm allowing MEF2s to interact with other proteins for activation. Interacts with HDAC4 (in undifferentiating cells); the interaction translocates MEF2D to nuclear dots. Forms a heterodimer with MEF2A. Interacts with MAPK7; the interaction phosphorylates but does not activate MEF2D. Interacts with MYOG. Interacts with CCAR2 and HDAC3. In terms of processing, phosphorylated on Ser-430 by CDK5 is required for Lys-425 sumoylation and inhibits transcriptional activity. In neurons, enhanced CDK5 activity induced by neurotoxins promotes caspase 3-mediated cleavage leading to neuron apoptosis. Phosphorylation on Ser-180 can be enhanced by EGF. Phosphorylated and activated by CaMK4. Post-translationally, acetylated on Lys-425 by CREBBP. Acetylated by EP300. Deacetylated by SIRT1 and HDAC3. Sumoylated on Lys-425 with SUMO2 but not SUMO1; which inhibits transcriptional activity and myogenic activity. Desumoylated by SENP3.

It is found in the nucleus. Its function is as follows. Transcriptional activator which binds specifically to the MEF2 element, 5'-YTA[AT](4)TAR-3', found in numerous muscle-specific, growth factor- and stress-induced genes. Mediates cellular functions not only in skeletal and cardiac muscle development, but also in neuronal differentiation and survival. Plays diverse roles in the control of cell growth, survival and apoptosis via p38 MAPK signaling in muscle-specific and/or growth factor-related transcription. Plays a critical role in the regulation of neuronal apoptosis. This chain is Myocyte-specific enhancer factor 2D (Mef2d), found in Rattus norvegicus (Rat).